Here is a 347-residue protein sequence, read N- to C-terminus: Biotin synthase (347 aa).

In terms of domain architecture, Radical SAM core spans 54–273 (NHVETASLLS…IAVARIMMPK (220 aa)). [4Fe-4S] cluster is bound by residues Cys-69, Cys-73, and Cys-76. Cys-113, Cys-144, Cys-204, and Arg-277 together coordinate [2Fe-2S] cluster.

This sequence belongs to the radical SAM superfamily. Biotin synthase family. In terms of assembly, homodimer. It depends on [4Fe-4S] cluster as a cofactor. Requires [2Fe-2S] cluster as cofactor.

It catalyses the reaction (4R,5S)-dethiobiotin + (sulfur carrier)-SH + 2 reduced [2Fe-2S]-[ferredoxin] + 2 S-adenosyl-L-methionine = (sulfur carrier)-H + biotin + 2 5'-deoxyadenosine + 2 L-methionine + 2 oxidized [2Fe-2S]-[ferredoxin]. It functions in the pathway cofactor biosynthesis; biotin biosynthesis; biotin from 7,8-diaminononanoate: step 2/2. Functionally, catalyzes the conversion of dethiobiotin (DTB) to biotin by the insertion of a sulfur atom into dethiobiotin via a radical-based mechanism. The chain is Biotin synthase from Afipia carboxidovorans (strain ATCC 49405 / DSM 1227 / KCTC 32145 / OM5) (Oligotropha carboxidovorans).